Here is a 231-residue protein sequence, read N- to C-terminus: 5'-methylthioadenosine/S-adenosylhomocysteine nucleosidase (231 aa).

Glu-12 serves as the catalytic Proton acceptor. Residues Gly-78, Val-153, and Met-174–Glu-175 contribute to the substrate site. The Proton donor role is filled by Asp-198.

This sequence belongs to the PNP/UDP phosphorylase family. MtnN subfamily.

It catalyses the reaction S-adenosyl-L-homocysteine + H2O = S-(5-deoxy-D-ribos-5-yl)-L-homocysteine + adenine. The catalysed reaction is S-methyl-5'-thioadenosine + H2O = 5-(methylsulfanyl)-D-ribose + adenine. It carries out the reaction 5'-deoxyadenosine + H2O = 5-deoxy-D-ribose + adenine. The protein operates within amino-acid biosynthesis; L-methionine biosynthesis via salvage pathway; S-methyl-5-thio-alpha-D-ribose 1-phosphate from S-methyl-5'-thioadenosine (hydrolase route): step 1/2. Its function is as follows. Catalyzes the irreversible cleavage of the glycosidic bond in both 5'-methylthioadenosine (MTA) and S-adenosylhomocysteine (SAH/AdoHcy) to adenine and the corresponding thioribose, 5'-methylthioribose and S-ribosylhomocysteine, respectively. Also cleaves 5'-deoxyadenosine, a toxic by-product of radical S-adenosylmethionine (SAM) enzymes, into 5-deoxyribose and adenine. This chain is 5'-methylthioadenosine/S-adenosylhomocysteine nucleosidase, found in Vibrio vulnificus (strain YJ016).